We begin with the raw amino-acid sequence, 399 residues long: Elongation factor Tu (399 aa).

The 195-residue stretch at 10 to 204 (KPHVNIGTIG…AVDASIPEPE (195 aa)) folds into the tr-type G domain. The G1 stretch occupies residues 19 to 26 (GHVDHGKT). A GTP-binding site is contributed by 19–26 (GHVDHGKT). T26 is a binding site for Mg(2+). The G2 stretch occupies residues 60–64 (GITIN). Residues 81 to 84 (DCPG) form a G3 region. GTP contacts are provided by residues 81–85 (DCPGH) and 136–139 (NKCD). Residues 136–139 (NKCD) form a G4 region. The G5 stretch occupies residues 174 to 176 (SGL).

Belongs to the TRAFAC class translation factor GTPase superfamily. Classic translation factor GTPase family. EF-Tu/EF-1A subfamily. Monomer.

Its subcellular location is the cytoplasm. The enzyme catalyses GTP + H2O = GDP + phosphate + H(+). GTP hydrolase that promotes the GTP-dependent binding of aminoacyl-tRNA to the A-site of ribosomes during protein biosynthesis. This Prochlorococcus marinus (strain SARG / CCMP1375 / SS120) protein is Elongation factor Tu.